Reading from the N-terminus, the 368-residue chain is Probable dual-specificity RNA methyltransferase RlmN (368 aa).

Catalysis depends on Glu-109, which acts as the Proton acceptor. The region spanning 115-355 (YPDRVTMCIS…VTVRDTRGQE (241 aa)) is the Radical SAM core domain. The cysteines at positions 122 and 360 are disulfide-linked. Cys-129, Cys-133, and Cys-136 together coordinate [4Fe-4S] cluster. S-adenosyl-L-methionine-binding positions include 184-185 (GE), Ser-218, 241-243 (SLH), and Asn-317. Residue Cys-360 is the S-methylcysteine intermediate of the active site.

Belongs to the radical SAM superfamily. RlmN family. It depends on [4Fe-4S] cluster as a cofactor.

The protein localises to the cytoplasm. It carries out the reaction adenosine(2503) in 23S rRNA + 2 reduced [2Fe-2S]-[ferredoxin] + 2 S-adenosyl-L-methionine = 2-methyladenosine(2503) in 23S rRNA + 5'-deoxyadenosine + L-methionine + 2 oxidized [2Fe-2S]-[ferredoxin] + S-adenosyl-L-homocysteine. The enzyme catalyses adenosine(37) in tRNA + 2 reduced [2Fe-2S]-[ferredoxin] + 2 S-adenosyl-L-methionine = 2-methyladenosine(37) in tRNA + 5'-deoxyadenosine + L-methionine + 2 oxidized [2Fe-2S]-[ferredoxin] + S-adenosyl-L-homocysteine. In terms of biological role, specifically methylates position 2 of adenine 2503 in 23S rRNA and position 2 of adenine 37 in tRNAs. The protein is Probable dual-specificity RNA methyltransferase RlmN of Streptomyces griseus subsp. griseus (strain JCM 4626 / CBS 651.72 / NBRC 13350 / KCC S-0626 / ISP 5235).